A 735-amino-acid chain; its full sequence is Two pore calcium channel protein 1B (735 aa).

Over 1–76 (MEEYLLPGES…ELYFMFTRFD (76 aa)) the chain is Cytoplasmic. The chain crosses the membrane as a helical span at residues 77-97 (FLWSLNYLALVVLNFFEKPLW). Residues 98-125 (CSKHLAESCNNRDYYYLGELPFLTGAES) lie on the Extracellular side of the membrane. A helical membrane pass occupies residues 126–146 (LIFEGVTLLLLIIHILFPISY). The Cytoplasmic segment spans residues 147–161 (EGFNLYWRSLLNRLK). A helical membrane pass occupies residues 162–182 (VILLLILVADIVVYILLPADF). Tyrosine 183 is a topological domain (extracellular). The helical; Voltage-sensor transmembrane segment at 184–202 (YLPFRIAPYLRVVFFILNI) threads the bilayer. Residues 203 to 208 (RELRDS) lie on the Cytoplasmic side of the membrane. Residues 209-229 (FFILAGMLGTYLNVVALSALF) traverse the membrane as a helical segment. Residues 230-248 (LLFSSWLAYVFFEDTRQGK) are Extracellular-facing. The pore-forming intramembrane region spans 249–263 (TTFTSYGTTLYQMFV). Residues 264–286 (LFTTSNNPDVWIPAYKDSRWYCL) are Extracellular-facing. A helical membrane pass occupies residues 287 to 307 (FFVLYVLLGVYFVTNLILAVV). Topologically, residues 308–431 (YDSFKSELVK…ASEKLRGFIR (124 aa)) are cytoplasmic. EF-hand domains lie at 325–360 (LRLR…LNKY) and 366–401 (ISGD…IGLR). Residues 432–452 (GATFEYIIVFVLLVNLVAVII) traverse the membrane as a helical segment. Residues 453–470 (ETTLDIQNNSGQTFWQKV) are Extracellular-facing. N-linked (GlcNAc...) asparagine glycosylation occurs at asparagine 460. Residues 471-491 (EFTFGWLYVIEMALKVYTYGF) form a helical membrane-spanning segment. Residues 492–501 (ENYWRDGQNR) are Cytoplasmic-facing. A helical membrane pass occupies residues 502 to 522 (FDFIVTWVIVIGETTTFVAPD). The Extracellular portion of the chain corresponds to 523–531 (DLTFLSNGE). The chain crosses the membrane as a helical; Voltage-sensor span at residues 532-549 (WIRYLLIARMLRLIRLLM). The Cytoplasmic segment spans residues 550 to 560 (HVERYRAFVAT). Residues 561-581 (FLTLIPSLMPYLGTIFCILCF) traverse the membrane as a helical segment. The Extracellular portion of the chain corresponds to 582–618 (YCSLGLQIFGGIVNTGNPNLAQTDLAGNDYLLFNFND). Residues 619–633 (YPNGMVTLFNILVMG) constitute an intramembrane region (pore-forming). Residues 634 to 654 (NWQVWMQSYKELTGTSWTYAY) lie on the Extracellular side of the membrane. A helical membrane pass occupies residues 655–675 (FVSFYLISVLWLLNLIVAFVL). Over 676 to 735 (EAFQAEMDLEASARCVDGDDKEAKRERRRNVGTKTRSQRVDFLLHHMLRSELTECSNDNP) the chain is Cytoplasmic.

Belongs to the calcium channel alpha-1 subunit (TC 1.A.1.11) family. Two pore calcium channel subfamily. In terms of assembly, homodimer.

It localises to the membrane. Inhibited by Al(3+), La(3+) and Gd(3+). Up-regulated by H(2)O(2), cryptogein, salicylic acid (SA) and cold shock. Its function is as follows. Functions as a voltage-gated inward-rectifying Ca(2+) channel (VDCC) across the plasma membrane that mediates sucrose-induced Ca(2+) influx in autotrophically grown leaf cells. Acts as the major ROS-responsive Ca(2+) channel and is the possible target of Al-dependent inhibition. Plays a regulatory role in defense responses. This Nicotiana tabacum (Common tobacco) protein is Two pore calcium channel protein 1B (TPC1B).